The following is a 355-amino-acid chain: 3-dehydroquinate synthase (355 aa).

Residues 71 to 76 (EGEASK), 105 to 109 (GVVGD), 129 to 130 (TS), Lys142, and Lys151 contribute to the NAD(+) site. Positions 184, 246, and 263 each coordinate Zn(2+).

Belongs to the sugar phosphate cyclases superfamily. Dehydroquinate synthase family. Co(2+) is required as a cofactor. The cofactor is Zn(2+). Requires NAD(+) as cofactor.

It is found in the cytoplasm. The catalysed reaction is 7-phospho-2-dehydro-3-deoxy-D-arabino-heptonate = 3-dehydroquinate + phosphate. The protein operates within metabolic intermediate biosynthesis; chorismate biosynthesis; chorismate from D-erythrose 4-phosphate and phosphoenolpyruvate: step 2/7. Functionally, catalyzes the conversion of 3-deoxy-D-arabino-heptulosonate 7-phosphate (DAHP) to dehydroquinate (DHQ). This chain is 3-dehydroquinate synthase, found in Streptococcus thermophilus (strain CNRZ 1066).